A 588-amino-acid polypeptide reads, in one-letter code: Proteasome-associated ATPase (588 aa).

Positions 1 to 10 (MAAHDDDMNR) are enriched in basic and acidic residues. A disordered region spans residues 1 to 23 (MAAHDDDMNRGIRPGRGSDDPSG). A coiled-coil region spans residues 47–94 (RILEERIVELQTNLAGVSAQNERLANTLREARDQIVALKEEVDRLAQP). 276–281 (GCGKTL) is an ATP binding site. Residues 587–588 (YL) are docks into pockets in the proteasome alpha-ring.

This sequence belongs to the AAA ATPase family. In terms of assembly, homohexamer. Assembles into a hexameric ring structure that caps the 20S proteasome core. Strongly interacts with the prokaryotic ubiquitin-like protein Pup through a hydrophobic interface; the interacting region of ARC lies in its N-terminal coiled-coil domain. There is one Pup binding site per ARC hexamer ring. Upon ATP-binding, the C-terminus of ARC interacts with the alpha-rings of the proteasome core, possibly by binding to the intersubunit pockets.

It participates in protein degradation; proteasomal Pup-dependent pathway. Functionally, ATPase which is responsible for recognizing, binding, unfolding and translocation of pupylated proteins into the bacterial 20S proteasome core particle. May be essential for opening the gate of the 20S proteasome via an interaction with its C-terminus, thereby allowing substrate entry and access to the site of proteolysis. Thus, the C-termini of the proteasomal ATPase may function like a 'key in a lock' to induce gate opening and therefore regulate proteolysis. This is Proteasome-associated ATPase from Streptomyces scabiei (strain 87.22).